Consider the following 246-residue polypeptide: MSSDKTSQQTFKLAPNNSVAQSNSIDQNKNKNNILSTIETMDKSISEDLYPKLQNIVSTVNLSTKLDLKQIALRARNAEYNPKRFAAVIMRLRDPKTTALIFASGKMVCTGAKTEEDSNRAARKYAKIIQKIGFPVQFKDFKIQNIVGSTDVKFPINLDHLEQDHKKFVQYEPEIFPGKIYREFNTKIVLLIFVSGKIVLTGAKTRENINKAFQKIYWVLYNYQKKDYRGANLHNQNLNIKPSIKN.

The tract at residues 1–27 is disordered; it reads MSSDKTSQQTFKLAPNNSVAQSNSIDQ. Repeat copies occupy residues 53-129 and 143-220.

Belongs to the TBP family. Belongs to the TFIID complex together with the TBP-associated factors (TAFs). Binds DNA as monomer.

The protein resides in the nucleus. In terms of biological role, general transcription factor that functions at the core of the DNA-binding multiprotein factor TFIID. Binding of TFIID to the TATA box is the initial transcriptional step of the pre-initiation complex (PIC), playing a role in the activation of eukaryotic genes transcribed by RNA polymerase II. This Tetrahymena thermophila protein is TATA-box-binding protein.